Here is a 349-residue protein sequence, read N- to C-terminus: DNA replication and repair protein RecF (349 aa).

Gly-30–Thr-37 contributes to the ATP binding site.

It belongs to the RecF family.

The protein localises to the cytoplasm. In terms of biological role, the RecF protein is involved in DNA metabolism; it is required for DNA replication and normal SOS inducibility. RecF binds preferentially to single-stranded, linear DNA. It also seems to bind ATP. The sequence is that of DNA replication and repair protein RecF from Francisella tularensis subsp. tularensis (strain FSC 198).